The following is a 294-amino-acid chain: Putative isocitrate dehydrogenase [NAD] subunit-like 4 (294 aa).

The protein belongs to the isocitrate and isopropylmalate dehydrogenases family.

Its function is as follows. Performs an essential role in the oxidative function of the citric acid cycle. The polypeptide is Putative isocitrate dehydrogenase [NAD] subunit-like 4 (IDH4) (Arabidopsis thaliana (Mouse-ear cress)).